Reading from the N-terminus, the 38-residue chain is Photosystem II reaction center protein T (38 aa).

A helical membrane pass occupies residues 3–23 (ALVYTFLLVSTLGIIFFAIFF).

The protein belongs to the PsbT family. In terms of assembly, PSII is composed of 1 copy each of membrane proteins PsbA, PsbB, PsbC, PsbD, PsbE, PsbF, PsbH, PsbI, PsbJ, PsbK, PsbL, PsbM, PsbT, PsbY, PsbZ, Psb30/Ycf12, at least 3 peripheral proteins of the oxygen-evolving complex and a large number of cofactors. It forms dimeric complexes.

It is found in the plastid. Its subcellular location is the chloroplast thylakoid membrane. Its function is as follows. Found at the monomer-monomer interface of the photosystem II (PS II) dimer, plays a role in assembly and dimerization of PSII. PSII is a light-driven water plastoquinone oxidoreductase, using light energy to abstract electrons from H(2)O, generating a proton gradient subsequently used for ATP formation. This is Photosystem II reaction center protein T from Secale cereale (Rye).